A 75-amino-acid chain; its full sequence is Alpha-elapitoxin-Bc2c (75 aa).

An N-terminal signal peptide occupies residues 1-2; sequence YT. 5 disulfides stabilise this stretch: Cys5–Cys24, Cys17–Cys45, Cys30–Cys34, Cys49–Cys60, and Cys61–Cys66.

This sequence belongs to the three-finger toxin family. Long-chain subfamily. Type II alpha-neurotoxin sub-subfamily. In terms of assembly, monomer in solution, homodimer in crystal state. In terms of tissue distribution, expressed by the venom gland.

It is found in the secreted. Binds to muscular and neuronal nicotinic acetylcholine receptor (nAChR) and inhibits acetylcholine from binding to the receptor, thereby impairing neuromuscular and neuronal transmission. Blocks muscle type nAChR. Also binds with high affinity to alpha-7/CHRNA7 nAChRs. In addition, shows a weak inhibition of neuronal alpha-3-beta-2/CHRNA3-CHRNB2 nAChR. Selectively binds to alpha-1-delta subunit interface of the mouse muscle nicotinic acetylcholine receptor, with a 10-fold higher affinity for the adult than for the fetal receptors. In vivo, when intraperitoneally injected into mice, causes flaccid paralysis and respiratory distress, followed by death within 2-4 hours. This chain is Alpha-elapitoxin-Bc2c, found in Bungarus candidus (Malayan krait).